The primary structure comprises 359 residues: Peptide chain release factor 1 (359 aa).

Q236 carries the post-translational modification N5-methylglutamine. A disordered region spans residues 288 to 307 (QDEQDAERKSTIGTGDRSER). A compositionally biased stretch (basic and acidic residues) spans 293 to 307 (AERKSTIGTGDRSER).

Belongs to the prokaryotic/mitochondrial release factor family. In terms of processing, methylated by PrmC. Methylation increases the termination efficiency of RF1.

Its subcellular location is the cytoplasm. Peptide chain release factor 1 directs the termination of translation in response to the peptide chain termination codons UAG and UAA. The polypeptide is Peptide chain release factor 1 (Streptococcus sanguinis (strain SK36)).